The sequence spans 471 residues: Secretogranin-3 (471 aa).

The signal sequence occupies residues 1–22 (MGFLWTGSWILVLVLNSGPIQA). Disordered stretches follow at residues 24-45 (PKPE…ERPL), 89-108 (TVEK…QLNV), and 345-404 (KLEK…TDEA). A compositionally biased stretch (basic and acidic residues) spans 28–45 (GSQDKSLHNRELSAERPL). S40 carries the post-translational modification Phosphoserine. S40 carries an O-linked (Xyl...) (chondroitin sulfate) serine glycan. 2 stretches are compositionally biased toward basic and acidic residues: residues 345 to 355 (KLEKNTTDSKS) and 364 to 404 (KSQE…TDEA). The residue at position 365 (S365) is a Phosphoserine.

In terms of assembly, interacts with CHGA. Interacts with secretogranin II/SCG2. Interacts (via C-terminus) with CPE. Expressed in various brain areas, with highest levels in the arcuate nucleus and the lateral hypothalamic area, as well as the paraventricular nucleus and the ventromedial hypothalamus (at protein level).

Its subcellular location is the cytoplasmic vesicle. It is found in the secretory vesicle. The protein localises to the secretory vesicle membrane. The protein resides in the secreted. Its function is as follows. Member of the granin protein family that regulates the biogenesis of secretory granules. Acts as a sorting receptor for intragranular proteins including chromogranin A/CHGA. May also play a role in angiogenesis. Promotes endothelial proliferation, migration and tube formation through MEK/ERK signaling pathway. The polypeptide is Secretogranin-3 (Scg3) (Mus musculus (Mouse)).